A 387-amino-acid chain; its full sequence is Putative gustatory receptor 22d (387 aa).

At 1–43 (MFRPRCGLRQKFVYVILKSILYSSWLLGIFPFKYEPKKRRLRR) the chain is on the cytoplasmic side. A helical transmembrane segment spans residues 44-64 (SMWLILFGVVISSSLLILMVK). The Extracellular segment spans residues 65–82 (QSAEDREHGIMLDVFQRN). The helical transmembrane segment at 83–103 (ALLYQISSLMGVVGVVSICTV) threads the bilayer. Residues 104–142 (HLRTLWRSKHLEEIYNGLMLLEAKYFCSNAVECPAFDGY) are Cytoplasmic-facing. Residues 143-163 (VIQKGVVIVVGLLAPWMVHFG) traverse the membrane as a helical segment. Residues 164 to 184 (MPDSKLPVLNVLVVSMVKLGT) lie on the Extracellular side of the membrane. A helical membrane pass occupies residues 185–205 (LLLALHYHLGVVIIYRFVWLI). The Cytoplasmic portion of the chain corresponds to 206 to 252 (NRELLSLVCSLRGNHKGSSSRVRFLLKLYNKLVNLYSKLADCYDCQT). The chain crosses the membrane as a helical span at residues 253–273 (VLMMAIFLAANIIVCFYMIVY). At 274-281 (RISLSKMS) the chain is on the extracellular side. Residues 282 to 302 (FFVMLIMFPLAIANNFMDFWL) traverse the membrane as a helical segment. Over 303 to 363 (SMKVCDLLQK…HCGLFHVNRE (61 aa)) the chain is Cytoplasmic. Residues 364 to 384 (MGFKMFVASVLYLLYLVQFDY) traverse the membrane as a helical segment. Over 385–387 (MNL) the chain is Extracellular.

It belongs to the insect chemoreceptor superfamily. Gustatory receptor (GR) family. Gr22e subfamily. In terms of tissue distribution, expressed in neurons of the dorsal pharyngeal sense organs of larvae.

It localises to the cell membrane. In terms of biological role, probable gustatory receptor which mediates acceptance or avoidance behavior, depending on its substrates. The polypeptide is Putative gustatory receptor 22d (Drosophila melanogaster (Fruit fly)).